Consider the following 578-residue polypeptide: Laccase-10 (578 aa).

Positions 1 to 29 (MGARCLALLLLYGTLLLLLLLPQLPLAGA) are cleaved as a signal peptide. 2 Plastocyanin-like domains span residues 37–153 (NVKL…PKAG) and 163–319 (KDVP…YAPP). N-linked (GlcNAc...) asparagine glycans are attached at residues asparagine 42 and asparagine 83. The Cu cation site is built by histidine 87 and histidine 89. A glycan (N-linked (GlcNAc...) asparagine) is linked at asparagine 119. Cu cation-binding residues include histidine 132 and histidine 134. N-linked (GlcNAc...) asparagine glycans are attached at residues asparagine 192, asparagine 208, asparagine 244, asparagine 307, asparagine 336, asparagine 384, asparagine 392, asparagine 402, asparagine 438, asparagine 445, asparagine 448, asparagine 451, and asparagine 461. Residues 428–562 (DFPASPLEPF…KMAWVVNDGP (135 aa)) enclose the Plastocyanin-like 3 domain. Cu cation is bound by residues histidine 479, histidine 482, histidine 484, histidine 541, cysteine 542, histidine 543, and histidine 547.

The protein belongs to the multicopper oxidase family. Requires Cu cation as cofactor.

The protein localises to the secreted. Its subcellular location is the extracellular space. The protein resides in the apoplast. It carries out the reaction 4 hydroquinone + O2 = 4 benzosemiquinone + 2 H2O. In terms of biological role, lignin degradation and detoxification of lignin-derived products. The polypeptide is Laccase-10 (LAC10) (Oryza sativa subsp. japonica (Rice)).